Here is a 473-residue protein sequence, read N- to C-terminus: RUN domain-containing protein 3B (473 aa).

The segment at 1-24 is disordered; sequence MASRSLGGLSGIRGGGGGGGKKSL. Positions 8–21 are enriched in gly residues; sequence GLSGIRGGGGGGGK. Residue Arg13 is modified to Omega-N-methylarginine. An RUN domain is found at 57–206; sequence DDSSPEFNNF…IDFSFCLKGE (150 aa). Phosphoserine occurs at positions 232 and 233. Residues 317–342 are a coiled coil; it reads AHKLEKEQLEYIIVELQDQLTVLKNN. The segment covering 399-422 has biased composition (polar residues); it reads SLSQTSLDPGQSQEGDGKQDTLNV. A disordered region spans residues 399–428; that stretch reads SLSQTSLDPGQSQEGDGKQDTLNVMSEGKE.

This sequence belongs to the RUNDC3 family. Interacts with RAP2A. Isoform 2 is expressed at high levels in brain, thymus, ovary, testis, leukocyte, liver, small intestine and prostate. Isoform 1 is expressed in the brain, testis and adrenal gland. It is activated in tumorigenic breast cancer cell lines and in the primary tumor of breast cancer patients. Activation also correlates with metastatic lymph node invasion and can be detected in metastatic epithelial cells from the lymph nodes and in the bone marrow of patients.

In Homo sapiens (Human), this protein is RUN domain-containing protein 3B (RUNDC3B).